The following is a 97-amino-acid chain: Co-chaperonin GroES (97 aa).

It belongs to the GroES chaperonin family. As to quaternary structure, heptamer of 7 subunits arranged in a ring. Interacts with the chaperonin GroEL.

The protein resides in the cytoplasm. Its function is as follows. Together with the chaperonin GroEL, plays an essential role in assisting protein folding. The GroEL-GroES system forms a nano-cage that allows encapsulation of the non-native substrate proteins and provides a physical environment optimized to promote and accelerate protein folding. GroES binds to the apical surface of the GroEL ring, thereby capping the opening of the GroEL channel. This chain is Co-chaperonin GroES, found in Buchnera aphidicola subsp. Pterocomma populeum.